The primary structure comprises 409 residues: 2,3-bisphosphoglycerate-independent phosphoglycerate mutase (409 aa).

Residues 160 to 179 (ITDADPKHEGNKPKTVKPLD) are disordered.

The protein belongs to the BPG-independent phosphoglycerate mutase family. A-PGAM subfamily.

The enzyme catalyses (2R)-2-phosphoglycerate = (2R)-3-phosphoglycerate. The protein operates within carbohydrate degradation; glycolysis; pyruvate from D-glyceraldehyde 3-phosphate: step 3/5. Its function is as follows. Catalyzes the interconversion of 2-phosphoglycerate and 3-phosphoglycerate. This chain is 2,3-bisphosphoglycerate-independent phosphoglycerate mutase, found in Methanosphaera stadtmanae (strain ATCC 43021 / DSM 3091 / JCM 11832 / MCB-3).